Reading from the N-terminus, the 483-residue chain is uncharacterized protein (483 aa).

This is an uncharacterized protein from Acanthamoeba polyphaga mimivirus (APMV).